We begin with the raw amino-acid sequence, 206 residues long: Large ribosomal subunit protein uL3 (206 aa).

The tract at residues 126-155 (HGHAGGPGAHGSRFHRHPGSMGANSTPSRV) is disordered.

This sequence belongs to the universal ribosomal protein uL3 family. Part of the 50S ribosomal subunit. Forms a cluster with proteins L14 and L19.

Its function is as follows. One of the primary rRNA binding proteins, it binds directly near the 3'-end of the 23S rRNA, where it nucleates assembly of the 50S subunit. This is Large ribosomal subunit protein uL3 from Leptospira interrogans serogroup Icterohaemorrhagiae serovar copenhageni (strain Fiocruz L1-130).